Here is a 397-residue protein sequence, read N- to C-terminus: Tryptophan synthase beta chain (397 aa).

Position 88 is an N6-(pyridoxal phosphate)lysine (Lys88).

The protein belongs to the TrpB family. Tetramer of two alpha and two beta chains. Requires pyridoxal 5'-phosphate as cofactor.

The catalysed reaction is (1S,2R)-1-C-(indol-3-yl)glycerol 3-phosphate + L-serine = D-glyceraldehyde 3-phosphate + L-tryptophan + H2O. The protein operates within amino-acid biosynthesis; L-tryptophan biosynthesis; L-tryptophan from chorismate: step 5/5. Functionally, the beta subunit is responsible for the synthesis of L-tryptophan from indole and L-serine. The polypeptide is Tryptophan synthase beta chain (Shewanella amazonensis (strain ATCC BAA-1098 / SB2B)).